An 873-amino-acid polypeptide reads, in one-letter code: Cyanophycin synthetase (873 aa).

Positions 224-480 (KTILQDAGIP…VAAPVLDMLF (257 aa)) constitute an ATP-grasp domain. 495-501 (GTNGKTT) serves as a coordination point for ATP.

This sequence in the C-terminal section; belongs to the MurCDEF family. As to quaternary structure, homodimer.

The enzyme catalyses [L-4-(L-arginin-2-N-yl)aspartate](n) + L-aspartate + ATP = [L-4-(L-arginin-2-N-yl)aspartate](n)-L-aspartate + ADP + phosphate + H(+). It carries out the reaction [L-4-(L-arginin-2-N-yl)aspartate](n)-L-aspartate + L-arginine + ATP = [L-4-(L-arginin-2-N-yl)aspartate](n+1) + ADP + phosphate + H(+). Functionally, catalyzes the ATP-dependent polymerization of arginine and aspartate to multi-L-arginyl-poly-L-aspartic acid (cyanophycin; a water-insoluble reserve polymer). The polypeptide is Cyanophycin synthetase (cphA) (Synechocystis sp. (strain ATCC 27184 / PCC 6803 / Kazusa)).